A 243-amino-acid polypeptide reads, in one-letter code: ATP synthase subunit a (243 aa).

Helical transmembrane passes span 29 to 49, 54 to 74, 89 to 109, 114 to 134, 144 to 164, 182 to 202, and 208 to 228; these read NASL…YIGL, IIPN…VSTI, VFTI…PLGF, HIAV…IIGF, ILLP…IELF, IAGH…NIFL, and IFII…AYIF.

It belongs to the ATPase A chain family. In terms of assembly, F-type ATPases have 2 components, CF(1) - the catalytic core - and CF(0) - the membrane proton channel. CF(1) has five subunits: alpha(3), beta(3), gamma(1), delta(1), epsilon(1). CF(0) has three main subunits: a(1), b(2) and c(9-12). The alpha and beta chains form an alternating ring which encloses part of the gamma chain. CF(1) is attached to CF(0) by a central stalk formed by the gamma and epsilon chains, while a peripheral stalk is formed by the delta and b chains.

Its subcellular location is the cell inner membrane. In terms of biological role, key component of the proton channel; it plays a direct role in the translocation of protons across the membrane. The polypeptide is ATP synthase subunit a (Ehrlichia canis (strain Jake)).